The sequence spans 211 residues: Putative F-box protein At1g52490 (211 aa).

In terms of domain architecture, F-box spans 12–59 (EEEYLQLPLDLIVEILKKLPLKSLVRFRCVSKQFSTIICSLRDFIESV).

The sequence is that of Putative F-box protein At1g52490 from Arabidopsis thaliana (Mouse-ear cress).